Consider the following 946-residue polypeptide: Clumping factor A (946 aa).

A signal peptide spans 1–39 (MNMKKKEKHAIRKKSIGVASVLVGTLIGFGLLSSKEADA). A YSIRK-G/S signaling motif motif is present at residues 9-20 (HAIRKKSIGVAS). Disordered regions lie at residues 34–199 (SKEA…SNKD) and 528–917 (FNNG…SEDE). Positions 40 to 542 (SENSVTQSDS…GSGDGIDKPV (503 aa)) are ligand binding A region. Low complexity predominate over residues 47–65 (SDSASNESKSNDSSSVSAA). Polar residues predominate over residues 71–111 (TNVSDTKTSSNTNNGETSVAQNPAQQETTQSALTNATTEET). 2 stretches are compositionally biased toward low complexity: residues 117–131 (ATTA…ATTQ) and 142–161 (NQTS…SVNS). Positions 162 to 199 (PQNSTNAENVSTTQDTSTEATPSNNESAPQSTDASNKD) are enriched in polar residues. Acidic residues predominate over residues 546-564 (QPDEPGEIEPIPEDSDSDP). A compositionally biased stretch (low complexity) spans 565–597 (GSDSGSDSNSDSGSDSGSDSTSDSGSDSASDSD). Over residues 598–874 (SASDSDSASD…DSDSESDSNS (277 aa)) the composition is skewed to acidic residues. Over residues 875–893 (DSESGSNNNVVPPNSPKNG) the composition is skewed to low complexity. Residues 900-909 (NEAKDSKEPL) are compositionally biased toward basic and acidic residues. The LPXTG sorting signal signature appears at 909–913 (LPDTG). Thr-912 carries the pentaglycyl murein peptidoglycan amidated threonine modification. Residues 913-946 (GSEDEANTSLIWGLLASIGSLLLFRRKKENKDKK) constitute a propeptide, removed by sortase.

It belongs to the serine-aspartate repeat-containing protein (SDr) family.

It localises to the secreted. Its subcellular location is the cell wall. In terms of biological role, cell surface-associated protein implicated in virulence. Promotes bacterial attachment exclusively to the gamma-chain of human fibrinogen. Induces formation of bacterial clumps. In Staphylococcus aureus (strain MW2), this protein is Clumping factor A (clfA).